The chain runs to 464 residues: Zinc transporter 6 (464 aa).

Over 1–33 (MGTIYLFRKTQRSLLGKLTQEFRLVTADRRSWK) the chain is Cytoplasmic. A helical transmembrane segment spans residues 34–54 (ILLFGAINVVCTGFLLTWCSS). Residues 55–64 (TNSMALTAYT) are Extracellular-facing. The chain crosses the membrane as a helical span at residues 65-85 (YLTIFDLFSLITCLISYWVMM). Over 86–98 (KKPSPTYSFGFER) the chain is Cytoplasmic. A helical transmembrane segment spans residues 99-119 (FEVLSVFASTVLAQLGALFIL). Residues 120–134 (KESAERFVEQPEIHT) lie on the Extracellular side of the membrane. A helical membrane pass occupies residues 135 to 155 (GRLLVGTFVALCFNLFSMLSI). Over 156–200 (RNKPFAYVSEAASTSWLQEHVADLSRSLCGIIPGLSSIFLPRMNP) the chain is Cytoplasmic. A helical transmembrane segment spans residues 201-221 (FVLIDIAGALALCITYMLIEI). At 222-228 (NNYFAVD) the chain is on the extracellular side. The helical transmembrane segment at 229-249 (TASAIAIAVMTFGTMYPMSVY) threads the bilayer. The Cytoplasmic segment spans residues 250–464 (SGKVLLQTTP…TPGQFTQFKQ (215 aa)).

It belongs to the cation diffusion facilitator (CDF) transporter (TC 2.A.4) family. SLC30A subfamily. As to quaternary structure, heterodimer with SLC30A5; form a functional zinc ion transmembrane transporter.

The protein localises to the golgi apparatus. It localises to the trans-Golgi network membrane. Has probably no intrinsic transporter activity but together with SLC30A5 forms a functional zinc ion:proton antiporter heterodimer, mediating zinc entry into the lumen of organelles along the secretory pathway. As part of that zinc ion:proton antiporter, contributes to zinc ion homeostasis within the early secretory pathway and regulates the activation and folding of enzymes like alkaline phosphatases and enzymes involved in phosphatidylinositol glycan anchor biosynthesis. In Xenopus tropicalis (Western clawed frog), this protein is Zinc transporter 6 (slc30a6).